The sequence spans 298 residues: Nucleoid occlusion protein (298 aa).

Residues 152-171 (EALAQRLGKGQSTVANKLRL) constitute a DNA-binding region (H-T-H motif).

It belongs to the ParB family.

Its subcellular location is the cytoplasm. The protein localises to the nucleoid. Effects nucleoid occlusion by binding relatively nonspecifically to DNA and preventing the assembly of the division machinery in the vicinity of the nucleoid, especially under conditions that disturb the cell cycle. It helps to coordinate cell division and chromosome segregation by preventing the formation of the Z ring through the nucleoid, which would cause chromosome breakage. This is Nucleoid occlusion protein from Lysinibacillus sphaericus (strain C3-41).